The sequence spans 277 residues: MVQRVVVSKLLNSSRPLVFGMIHVPALPGTPSNTLPMSAILKKVRKEADVYFKNGVDGVIVENMHDVPYVKPPASPEIVSSMALASDQLVKSRDAHHPAALTGIQILAAANREALAVAYTTGMDFIRAEGFVYSHVADEGWIDGCAGGLLRYRSSLKAENIAIFTDIKKKHSAHSVTSDVSIHEMAKDAKFNCADGVIVTGSATGSAASLEEMIQVMKVQEFPVLIGSGINGKNAREFVKAHGFIVGSDFKIGGEWKNDLDSGRISKFMKHVNTLKR.

The protein belongs to the BtpA family.

The protein resides in the mitochondrion. This is an uncharacterized protein from Caenorhabditis elegans.